A 269-amino-acid polypeptide reads, in one-letter code: 2-dehydro-3-deoxyphosphooctonate aldolase (269 aa).

This sequence belongs to the KdsA family.

It is found in the cytoplasm. The enzyme catalyses D-arabinose 5-phosphate + phosphoenolpyruvate + H2O = 3-deoxy-alpha-D-manno-2-octulosonate-8-phosphate + phosphate. It functions in the pathway carbohydrate biosynthesis; 3-deoxy-D-manno-octulosonate biosynthesis; 3-deoxy-D-manno-octulosonate from D-ribulose 5-phosphate: step 2/3. Its pathway is bacterial outer membrane biogenesis; lipopolysaccharide biosynthesis. This Chlamydia trachomatis serovar L2 (strain ATCC VR-902B / DSM 19102 / 434/Bu) protein is 2-dehydro-3-deoxyphosphooctonate aldolase.